Reading from the N-terminus, the 23-residue chain is Potassium channel toxin kappa-KTx 1.3 (23 aa).

2 cysteine pairs are disulfide-bonded: Cys-4–Cys-22 and Cys-8–Cys-18.

This sequence belongs to the short scorpion toxin superfamily. Potassium channel inhibitor kappa-KTx family. Kappa-KTx 1 subfamily. As to quaternary structure, monomer. Post-translationally, is not amidated. As to expression, expressed by the venom gland.

The protein localises to the secreted. Functionally, shows very weak blocking activity on voltage-gated potassium channels Kv10.1/KCNH1/EAG1 (6.2% inhibition by 40 uM of the toxin). Has no effect on the other voltage-gated potassium channels tested. The chain is Potassium channel toxin kappa-KTx 1.3 from Heterometrus spinifer (Asia giant forest scorpion).